The chain runs to 325 residues: Adenine deaminase (325 aa).

Residues His-8, His-10, and His-186 each coordinate Zn(2+). Glu-189 acts as the Proton donor in catalysis. Asp-267 provides a ligand contact to Zn(2+). Asp-268 contributes to the substrate binding site.

Belongs to the metallo-dependent hydrolases superfamily. Adenosine and AMP deaminases family. Adenine deaminase type 2 subfamily. Zn(2+) is required as a cofactor.

It carries out the reaction adenine + H2O + H(+) = hypoxanthine + NH4(+). Functionally, catalyzes the hydrolytic deamination of adenine to hypoxanthine. Plays an important role in the purine salvage pathway and in nitrogen catabolism. The sequence is that of Adenine deaminase from Chelativorans sp. (strain BNC1).